A 545-amino-acid polypeptide reads, in one-letter code: CTP synthase (545 aa).

Positions 1–265 (MSRFIFVTGG…DAIVVEKFGL (265 aa)) are amidoligase domain. Ser-13 provides a ligand contact to CTP. Position 13 (Ser-13) interacts with UTP. ATP is bound at residue 14–19 (SLGKGI). L-glutamine is bound at residue Tyr-54. Asp-71 contributes to the ATP binding site. Mg(2+) is bound by residues Asp-71 and Glu-139. Residues 146-148 (DIE), 186-191 (KTKPTQ), and Lys-222 each bind CTP. UTP is bound by residues 186 to 191 (KTKPTQ) and Lys-222. One can recognise a Glutamine amidotransferase type-1 domain in the interval 290 to 541 (TVGMVGKYIE…VAAALAEQKA (252 aa)). Gly-351 lines the L-glutamine pocket. Residue Cys-378 is the Nucleophile; for glutamine hydrolysis of the active site. L-glutamine-binding positions include 379-382 (LGMQ), Glu-402, and Arg-469. Active-site residues include His-514 and Glu-516.

This sequence belongs to the CTP synthase family. In terms of assembly, homotetramer.

It carries out the reaction UTP + L-glutamine + ATP + H2O = CTP + L-glutamate + ADP + phosphate + 2 H(+). The catalysed reaction is L-glutamine + H2O = L-glutamate + NH4(+). The enzyme catalyses UTP + NH4(+) + ATP = CTP + ADP + phosphate + 2 H(+). It functions in the pathway pyrimidine metabolism; CTP biosynthesis via de novo pathway; CTP from UDP: step 2/2. Allosterically activated by GTP, when glutamine is the substrate; GTP has no effect on the reaction when ammonia is the substrate. The allosteric effector GTP functions by stabilizing the protein conformation that binds the tetrahedral intermediate(s) formed during glutamine hydrolysis. Inhibited by the product CTP, via allosteric rather than competitive inhibition. Functionally, catalyzes the ATP-dependent amination of UTP to CTP with either L-glutamine or ammonia as the source of nitrogen. Regulates intracellular CTP levels through interactions with the four ribonucleotide triphosphates. The chain is CTP synthase from Alcanivorax borkumensis (strain ATCC 700651 / DSM 11573 / NCIMB 13689 / SK2).